The primary structure comprises 468 residues: Glutamate--tRNA ligase (468 aa).

The 'HIGH' region signature appears at 8-18 (PSPTGFLHVGG). Cys-97, Cys-99, Cys-124, and Asp-126 together coordinate Zn(2+). The 'KMSKS' region signature appears at 236-240 (KLSKR). Residue Lys-239 coordinates ATP.

Belongs to the class-I aminoacyl-tRNA synthetase family. Glutamate--tRNA ligase type 1 subfamily. As to quaternary structure, monomer. Zn(2+) is required as a cofactor.

It localises to the cytoplasm. The catalysed reaction is tRNA(Glu) + L-glutamate + ATP = L-glutamyl-tRNA(Glu) + AMP + diphosphate. Functionally, catalyzes the attachment of glutamate to tRNA(Glu) in a two-step reaction: glutamate is first activated by ATP to form Glu-AMP and then transferred to the acceptor end of tRNA(Glu). This chain is Glutamate--tRNA ligase, found in Francisella tularensis subsp. mediasiatica (strain FSC147).